The following is a 108-amino-acid chain: Nucleoid-associated protein Bphy_0952 (108 aa).

The tract at residues 87–108 (AQEKMGGMTSGLPLPPGFKLPF) is disordered. A compositionally biased stretch (pro residues) spans 99-108 (PLPPGFKLPF).

This sequence belongs to the YbaB/EbfC family. In terms of assembly, homodimer.

It localises to the cytoplasm. The protein resides in the nucleoid. Functionally, binds to DNA and alters its conformation. May be involved in regulation of gene expression, nucleoid organization and DNA protection. In Paraburkholderia phymatum (strain DSM 17167 / CIP 108236 / LMG 21445 / STM815) (Burkholderia phymatum), this protein is Nucleoid-associated protein Bphy_0952.